A 70-amino-acid chain; its full sequence is Small ribosomal subunit protein bS21 (70 aa).

The protein belongs to the bacterial ribosomal protein bS21 family.

The sequence is that of Small ribosomal subunit protein bS21 from Chromobacterium violaceum (strain ATCC 12472 / DSM 30191 / JCM 1249 / CCUG 213 / NBRC 12614 / NCIMB 9131 / NCTC 9757 / MK).